We begin with the raw amino-acid sequence, 509 residues long: Heat shock 70 kDa protein 14 (509 aa).

The protein belongs to the heat shock protein 70 family. Component of ribosome-associated complex (RAC), a heterodimer composed of Hsp70/DnaK-type chaperone HSPA14 and Hsp40/DnaJ-type chaperone DNAJC2.

The protein resides in the cytoplasm. It is found in the cytosol. Component of the ribosome-associated complex (RAC), a complex involved in folding or maintaining nascent polypeptides in a folding-competent state. In the RAC complex, binds to the nascent polypeptide chain, while DNAJC2 stimulates its ATPase activity. In Rattus norvegicus (Rat), this protein is Heat shock 70 kDa protein 14 (Hspa14).